Consider the following 551-residue polypeptide: Eukaryotic translation initiation factor 3 subunit D-2 (551 aa).

The interval 108 to 152 is disordered; sequence RTRGRTGRGTPNIASLGGSTAGGATASSTKYGKGRHTRNTQNVGR. Over residues 115 to 136 the composition is skewed to low complexity; the sequence is RGTPNIASLGGSTAGGATASST. Residues 290–304 form an RNA gate region; it reads QFDLLTVNETSVEPP. The disordered stretch occupies residues 527–551; sequence PENAFDSDRDEEEESSEPLSNSNDN.

The protein belongs to the eIF-3 subunit D family. In terms of assembly, component of the eukaryotic translation initiation factor 3 (eIF-3) complex. The eIF-3 complex interacts with pix.

It is found in the cytoplasm. MRNA cap-binding component of the eukaryotic translation initiation factor 3 (eIF-3) complex, which is involved in protein synthesis of a specialized repertoire of mRNAs and, together with other initiation factors, stimulates binding of mRNA and methionyl-tRNAi to the 40S ribosome. The eIF-3 complex specifically targets and initiates translation of a subset of mRNAs involved in cell proliferation. In the eIF-3 complex, eif3d specifically recognizes and binds the 7-methylguanosine cap of a subset of mRNAs. This chain is Eukaryotic translation initiation factor 3 subunit D-2, found in Drosophila simulans (Fruit fly).